We begin with the raw amino-acid sequence, 210 residues long: 3-hexulose-6-phosphate synthase 1 (210 aa).

Belongs to the HPS/KGPDC family. HPS subfamily.

It catalyses the reaction D-ribulose 5-phosphate + formaldehyde = D-arabino-hex-3-ulose 6-phosphate. Its pathway is one-carbon metabolism; formaldehyde assimilation via RuMP pathway; D-fructose 6-phosphate from D-ribulose 5-phosphate and formaldehyde: step 1/2. In terms of biological role, catalyzes the condensation of ribulose 5-phosphate with formaldehyde to form 3-hexulose 6-phosphate. In Staphylococcus saprophyticus subsp. saprophyticus (strain ATCC 15305 / DSM 20229 / NCIMB 8711 / NCTC 7292 / S-41), this protein is 3-hexulose-6-phosphate synthase 1.